Consider the following 538-residue polypeptide: Putative cysteine ligase BshC (538 aa).

Residues 460–483 adopt a coiled-coil conformation; sequence KINEQIELLEKMLKRNVEKKHEVQ.

The protein belongs to the BshC family.

In terms of biological role, involved in bacillithiol (BSH) biosynthesis. May catalyze the last step of the pathway, the addition of cysteine to glucosamine malate (GlcN-Mal) to generate BSH. The polypeptide is Putative cysteine ligase BshC (Bacillus mycoides (strain KBAB4) (Bacillus weihenstephanensis)).